Reading from the N-terminus, the 307-residue chain is Transcription factor MYB78 (307 aa).

2 consecutive HTH myb-type domains span residues 23–79 (EMDV…RPDV) and 80–130 (RRGN…QKHA). DNA-binding regions (H-T-H motif) lie at residues 51–75 (WNSLARCAELKRTGKSCRLRWLNYL) and 103–126 (WSKIAQYLPGRTDNEIKNYWRTRV).

Its subcellular location is the nucleus. This Arabidopsis thaliana (Mouse-ear cress) protein is Transcription factor MYB78.